The following is a 299-amino-acid chain: Acetaldehyde dehydrogenase (299 aa).

Position 11 to 14 (serine 11 to isoleucine 14) interacts with NAD(+). The active-site Acyl-thioester intermediate is cysteine 126. NAD(+) is bound by residues serine 157–asparagine 165 and asparagine 267.

Belongs to the acetaldehyde dehydrogenase family.

It catalyses the reaction acetaldehyde + NAD(+) + CoA = acetyl-CoA + NADH + H(+). This is Acetaldehyde dehydrogenase from Bacillus cereus (strain ATCC 10987 / NRS 248).